A 402-amino-acid chain; its full sequence is MASILSRLGSSRGQNSPLPPWAHSMLRSLGRSLGPLMASMAERNMRLFSGRAEPAQGEETFENWLSQVTGVLPDWHMPEEEKVRRLMRTLRGPAREVMRLLQAANPGLDVEDFLRAMKLVFGESESSVTAHSKFVNTVQEHGEKPSLYVIRLEVQLQNAIQAGVFAEREANQARLHQLLVGAEMSTDLRFRLKNLLRVYANEPERLPNFLELIRMIREEEEWEETFINPKRPRRAESVMERALSPMAFQSSPPIMISSIDCNVIEIDDSPDDSDEDVILVEPEDPPLPSSSASSFLGRAVSEDQVLVIESPNIFEIQAPSTSSGAGRKNNRGFGELRRARKRKHTIHCSHCGEEGHSKETCDNESDKGQVFENLIITLQELTHAEERARGAPGEPIGLSEPQ.

The interval 1–20 (MASILSRLGSSRGQNSPLPP) is disordered. The CCHC-type zinc finger occupies 346-363 (IHCSHCGEEGHSKETCDN). The tract at residues 383–402 (HAEERARGAPGEPIGLSEPQ) is disordered.

The protein belongs to the ZCCHC12 family. As to quaternary structure, interacts with SMAD1 and CREB-binding protein (CBP). Forms a protein-DNA complex through its association with SMAD1. In embryonic brains expression is restricted to the ventral region of the forebrain, including the septum, amygdala, caudal putamen, and in the basal-forebrain cholinergic neurons. In adults, expressed in the brain, and at low levels in the testis.

Transcriptional coactivator in the bone morphogenetic protein (BMP)-signaling pathway. It positively modulates BMP signaling by interacting with SMAD1 and associating with CBP in the transcription complex. It contributes to the BMP-induced enhancement of cholinergic-neuron-specific gene expression. In Mus musculus (Mouse), this protein is Zinc finger CCHC domain-containing protein 12 (Zcchc12).